The chain runs to 488 residues: E3 ubiquitin-protein ligase TRIM39 (488 aa).

The RING-type zinc finger occupies 29–70 (CSVCLEYLKEPVIIECGHNFCKACITRWWEDLERDFPCPVCR). The B box-type zinc-finger motif lies at 102–143 (RDESLCSQHHEPLSLFCYEDQEAVCLICAISHTHRAHTVVPM). The Zn(2+) site is built by C107, H110, C129, and H135. The stretch at 181–250 (ELKRLVESRR…AHLAAEVEGK (70 aa)) forms a coiled coil. Interaction with CDKN1A regions lie at residues 268–307 (KCEKVKTMEVTSVSIELEKNFSHFPRQYFALRKILKQLIA) and 359–488 (TSGR…TDWE). Positions 289–484 (SHFPRQYFAL…NAAPLTIRPP (196 aa)) constitute a B30.2/SPRY domain.

It belongs to the TRIM/RBCC family. Interacts with MOAP1. Interacts with CDKN1A. Autoubiquitinated.

It localises to the cytoplasm. The protein resides in the cytosol. It is found in the mitochondrion. The protein localises to the nucleus. It carries out the reaction S-ubiquitinyl-[E2 ubiquitin-conjugating enzyme]-L-cysteine + [acceptor protein]-L-lysine = [E2 ubiquitin-conjugating enzyme]-L-cysteine + N(6)-ubiquitinyl-[acceptor protein]-L-lysine.. It participates in protein modification; protein ubiquitination. In terms of biological role, E3 ubiquitin-protein ligase. May facilitate apoptosis by inhibiting APC/C-Cdh1-mediated poly-ubiquitination and subsequent proteasome-mediated degradation of the pro-apoptotic protein MOAP1. Regulates the G1/S transition of the cell cycle and DNA damage-induced G2 arrest by stabilizing CDKN1A/p21. Positively regulates CDKN1A/p21 stability by competing with DTL for CDKN1A/p21 binding, therefore disrupting DCX(DTL) E3 ubiquitin ligase complex-mediated CDKN1A/p21 ubiquitination and degradation. The protein is E3 ubiquitin-protein ligase TRIM39 (Trim39) of Rattus norvegicus (Rat).